Reading from the N-terminus, the 450-residue chain is Tubulin alpha-1 chain (450 aa).

GTP is bound by residues glutamine 11, glutamate 71, glycine 144, threonine 145, threonine 179, asparagine 206, and asparagine 228. Glutamate 71 is a binding site for Mg(2+). The active site involves glutamate 254.

Belongs to the tubulin family. In terms of assembly, dimer of alpha and beta chains. A typical microtubule is a hollow water-filled tube with an outer diameter of 25 nm and an inner diameter of 15 nM. Alpha-beta heterodimers associate head-to-tail to form protofilaments running lengthwise along the microtubule wall with the beta-tubulin subunit facing the microtubule plus end conferring a structural polarity. Microtubules usually have 13 protofilaments but different protofilament numbers can be found in some organisms and specialized cells. Requires Mg(2+) as cofactor. In terms of processing, undergoes a tyrosination/detyrosination cycle, the cyclic removal and re-addition of a C-terminal tyrosine residue by the enzymes tubulin tyrosine carboxypeptidase (TTCP) and tubulin tyrosine ligase (TTL), respectively.

Its subcellular location is the cytoplasm. The protein localises to the cytoskeleton. It catalyses the reaction GTP + H2O = GDP + phosphate + H(+). Functionally, tubulin is the major constituent of microtubules, a cylinder consisting of laterally associated linear protofilaments composed of alpha- and beta-tubulin heterodimers. Microtubules grow by the addition of GTP-tubulin dimers to the microtubule end, where a stabilizing cap forms. Below the cap, tubulin dimers are in GDP-bound state, owing to GTPase activity of alpha-tubulin. The chain is Tubulin alpha-1 chain (TUBA1) from Oryza sativa subsp. japonica (Rice).